The chain runs to 224 residues: MSASASTAADFVRFALDEGVLRFGSFKVKSGRISPYFFNAGLFNSGRSVGTLAGFYAQALIDSGVAFDMLFGPAYKGIPLATATSVALAGHGAMAGRDVPFAFNRKEAKDHGEGGTLVGAPLTGKVVIIDDVITAGTSVRESVEIIRAAGAEPAAVLIALDRMERAGPDDALSPHSAVQDVARTYGIPVVSIASLADIMTLLQDDAQFAEHRAAVQAYRSKYGV.

Lys-29 contributes to the 5-phospho-alpha-D-ribose 1-diphosphate binding site. 37 to 38 (FF) contributes to the orotate binding site. Residues 75-76 (YK), Arg-105, Lys-106, Lys-109, His-111, and 130-138 (DDVITAGTS) contribute to the 5-phospho-alpha-D-ribose 1-diphosphate site. Orotate contacts are provided by Thr-134 and Arg-162.

Belongs to the purine/pyrimidine phosphoribosyltransferase family. PyrE subfamily. As to quaternary structure, homodimer. It depends on Mg(2+) as a cofactor.

The enzyme catalyses orotidine 5'-phosphate + diphosphate = orotate + 5-phospho-alpha-D-ribose 1-diphosphate. It participates in pyrimidine metabolism; UMP biosynthesis via de novo pathway; UMP from orotate: step 1/2. Functionally, catalyzes the transfer of a ribosyl phosphate group from 5-phosphoribose 1-diphosphate to orotate, leading to the formation of orotidine monophosphate (OMP). The polypeptide is Orotate phosphoribosyltransferase (Bordetella pertussis (strain Tohama I / ATCC BAA-589 / NCTC 13251)).